Consider the following 200-residue polypeptide: Pyridoxal 5'-phosphate synthase subunit PdxT (200 aa).

52-54 (GES) contributes to the L-glutamine binding site. Catalysis depends on Cys-84, which acts as the Nucleophile. L-glutamine contacts are provided by residues Arg-116 and 145-146 (IR). Active-site charge relay system residues include His-181 and Glu-183.

It belongs to the glutaminase PdxT/SNO family. In the presence of PdxS, forms a dodecamer of heterodimers. Only shows activity in the heterodimer.

It carries out the reaction aldehydo-D-ribose 5-phosphate + D-glyceraldehyde 3-phosphate + L-glutamine = pyridoxal 5'-phosphate + L-glutamate + phosphate + 3 H2O + H(+). The catalysed reaction is L-glutamine + H2O = L-glutamate + NH4(+). The protein operates within cofactor biosynthesis; pyridoxal 5'-phosphate biosynthesis. Its function is as follows. Catalyzes the hydrolysis of glutamine to glutamate and ammonia as part of the biosynthesis of pyridoxal 5'-phosphate. The resulting ammonia molecule is channeled to the active site of PdxS. This chain is Pyridoxal 5'-phosphate synthase subunit PdxT, found in Saccharolobus solfataricus (strain ATCC 35092 / DSM 1617 / JCM 11322 / P2) (Sulfolobus solfataricus).